Here is a 127-residue protein sequence, read N- to C-terminus: Turripeptide OL172 (127 aa).

The signal sequence occupies residues 1 to 20; that stretch reads MFSTLIFLTAVTLLMMPSQT. A propeptide spanning residues 42-43 is cleaved from the precursor; the sequence is QR. Gln-44 is modified (pyrrolidone carboxylic acid). Positions 73–75 are excised as a propeptide; sequence QRK. Residue Gln-76 is modified to Pyrrolidone carboxylic acid. A propeptide spanning residues 104–106 is cleaved from the precursor; it reads QRK. A Pyrrolidone carboxylic acid modification is found at Gln-107.

In terms of processing, the turripeptide OL172 conotoxin-like contains 2 disulfide bonds. As to expression, expressed by the venom duct.

It localises to the secreted. Functionally, acts as a neurotoxin by inhibiting an ion channel. This chain is Turripeptide OL172, found in Iotyrris olangoensis (Sea snail).